The sequence spans 194 residues: CASP-like protein Ni6 (194 aa).

Residues 1–27 (MSSMETEKGAVPTPQAPPVAPTDNKYR) lie on the Cytoplasmic side of the membrane. Residues 28 to 48 (VVDVILRVLLLAASIASVVLM) traverse the membrane as a helical segment. The Extracellular portion of the chain corresponds to 49 to 75 (VTSKQTEIIVSPFGSRPNAAKFQNSPA). Residues 76 to 96 (FIYLVAALSVAGLYSIITALV) traverse the membrane as a helical segment. Topologically, residues 97–109 (SLSYMRKPIVPPK) are cytoplasmic. Residues 110–130 (LFWILLIHDVLLLGIVAAATG) traverse the membrane as a helical segment. Over 131 to 161 (TAGGVGYIGLKGNTHVRWGKIRNVYDKFCRH) the chain is Extracellular. Residues 162–182 (VGASIIVSLFAAAVLVLLVFV) traverse the membrane as a helical segment. At 183–194 (NANSLYRRIPKY) the chain is on the cytoplasmic side.

This sequence belongs to the Casparian strip membrane proteins (CASP) family. As to quaternary structure, homodimer and heterodimers.

The protein localises to the cell membrane. The sequence is that of CASP-like protein Ni6 (Ni6) from Beta vulgaris subsp. maritima (Sea beet).